Reading from the N-terminus, the 121-residue chain is Protein TusC (121 aa).

It belongs to the DsrF/TusC family. As to quaternary structure, heterohexamer, formed by a dimer of trimers. The hexameric TusBCD complex contains 2 copies each of TusB, TusC and TusD. The TusBCD complex interacts with TusE.

The protein resides in the cytoplasm. Its function is as follows. Part of a sulfur-relay system required for 2-thiolation of 5-methylaminomethyl-2-thiouridine (mnm(5)s(2)U) at tRNA wobble positions. The sequence is that of Protein TusC from Yersinia enterocolitica serotype O:8 / biotype 1B (strain NCTC 13174 / 8081).